The sequence spans 238 residues: Phosphatidylcholine synthase (238 aa).

Residues 1–16 (MPVNLSMTPINKAKAW) lie on the Cytoplasmic side of the membrane. The helical transmembrane segment at 17–37 (GVHAVTASGVILALLALLALV) threads the bilayer. Residues 38–41 (DNKP) lie on the Periplasmic side of the membrane. A helical transmembrane segment spans residues 42–62 (QACLLWLGLALLVDGLDGTLA). Topologically, residues 63 to 75 (RKYEVKEMLPHFD) are cytoplasmic. A helical transmembrane segment spans residues 76–96 (GSVLDLVIDYLTYVFIPAIFI). Residues 97–104 (YRYIPLPE) lie on the Periplasmic side of the membrane. Residues 105–125 (HFELLAVGVILVSSLFCFCNV) traverse the membrane as a helical segment. Residues 126–132 (NMKSTDN) are Cytoplasmic-facing. A helical membrane pass occupies residues 133–153 (YFVGFPAAWNVVAVYFYVLDL). Residues 154–155 (HP) are Periplasmic-facing. Residues 156 to 176 (WVNLATVLVLAALTLTRMKFL) traverse the membrane as a helical segment. Residues 177–183 (HPFRVRQ) lie on the Cytoplasmic side of the membrane. Residues 184–204 (FMPLNIAVTFVWLISSGLLIV) form a helical membrane-spanning segment. At 205–209 (QQPAD) the chain is on the periplasmic side. Residues 210 to 230 (LPILLGLWFAASAYFVGICLW) form a helical membrane-spanning segment. Residues 231–238 (RSAREWFG) are Cytoplasmic-facing.

Belongs to the CDP-alcohol phosphatidyltransferase class-I family. Mn(2+) is required as a cofactor.

Its subcellular location is the cell inner membrane. It catalyses the reaction a CDP-1,2-diacyl-sn-glycerol + choline = a 1,2-diacyl-sn-glycero-3-phosphocholine + CMP + H(+). In terms of biological role, condenses choline with CDP-diglyceride to produce phosphatidylcholine and CMP. The polypeptide is Phosphatidylcholine synthase (Pseudomonas aeruginosa (strain ATCC 15692 / DSM 22644 / CIP 104116 / JCM 14847 / LMG 12228 / 1C / PRS 101 / PAO1)).